Reading from the N-terminus, the 78-residue chain is Probable [Fe-S]-dependent transcriptional repressor (78 aa).

Iron-sulfur cluster is bound by residues C56, C61, C64, and C70.

It belongs to the FeoC family.

Functionally, may function as a transcriptional regulator that controls feoABC expression. The protein is Probable [Fe-S]-dependent transcriptional repressor of Escherichia coli O7:K1 (strain IAI39 / ExPEC).